Consider the following 119-residue polypeptide: Large ribosomal subunit protein bL20 (119 aa).

The protein belongs to the bacterial ribosomal protein bL20 family.

Its function is as follows. Binds directly to 23S ribosomal RNA and is necessary for the in vitro assembly process of the 50S ribosomal subunit. It is not involved in the protein synthesizing functions of that subunit. The polypeptide is Large ribosomal subunit protein bL20 (Neisseria gonorrhoeae (strain ATCC 700825 / FA 1090)).